Consider the following 459-residue polypeptide: ATP-dependent protease ATPase subunit HslU (459 aa).

ATP is bound by residues valine 26, 68–73 (GVGKTE), aspartate 271, glutamate 337, and arginine 409.

The protein belongs to the ClpX chaperone family. HslU subfamily. In terms of assembly, a double ring-shaped homohexamer of HslV is capped on each side by a ring-shaped HslU homohexamer. The assembly of the HslU/HslV complex is dependent on binding of ATP.

It localises to the cytoplasm. In terms of biological role, ATPase subunit of a proteasome-like degradation complex; this subunit has chaperone activity. The binding of ATP and its subsequent hydrolysis by HslU are essential for unfolding of protein substrates subsequently hydrolyzed by HslV. HslU recognizes the N-terminal part of its protein substrates and unfolds these before they are guided to HslV for hydrolysis. The chain is ATP-dependent protease ATPase subunit HslU from Xylella fastidiosa (strain 9a5c).